Reading from the N-terminus, the 248-residue chain is 26.2 kDa heat shock protein, mitochondrial (248 aa).

A mitochondrion-targeting transit peptide spans 1–32; it reads MASTVALKGRPLATLLRQLLAADAPPAATGRP. The interval 26 to 48 is disordered; the sequence is PAATGRPVAAAPAASGKPVTAPA. The sHSP domain maps to 139 to 248; the sequence is ATAAARRGGW…RKDVFQVNVE (110 aa).

This sequence belongs to the small heat shock protein (HSP20) family. As to quaternary structure, may form oligomeric structures.

The protein localises to the mitochondrion. The polypeptide is 26.2 kDa heat shock protein, mitochondrial (HSP26.2) (Oryza sativa subsp. japonica (Rice)).